The following is a 249-amino-acid chain: Small ribosomal subunit protein uS2 (249 aa).

Belongs to the universal ribosomal protein uS2 family.

In Listeria monocytogenes serovar 1/2a (strain ATCC BAA-679 / EGD-e), this protein is Small ribosomal subunit protein uS2.